Consider the following 514-residue polypeptide: 2-isopropylmalate synthase (514 aa).

Residues 5 to 268 (LIIFDTTLRD…DVGIDTTQIV (264 aa)) enclose the Pyruvate carboxyltransferase domain. Positions 14, 202, 204, and 239 each coordinate Mn(2+). The interval 395 to 514 (KFVSLSQHSE…KDDKLNPQRA (120 aa)) is regulatory domain.

Belongs to the alpha-IPM synthase/homocitrate synthase family. LeuA type 1 subfamily. As to quaternary structure, homodimer. Mn(2+) serves as cofactor.

The protein localises to the cytoplasm. The enzyme catalyses 3-methyl-2-oxobutanoate + acetyl-CoA + H2O = (2S)-2-isopropylmalate + CoA + H(+). It functions in the pathway amino-acid biosynthesis; L-leucine biosynthesis; L-leucine from 3-methyl-2-oxobutanoate: step 1/4. In terms of biological role, catalyzes the condensation of the acetyl group of acetyl-CoA with 3-methyl-2-oxobutanoate (2-ketoisovalerate) to form 3-carboxy-3-hydroxy-4-methylpentanoate (2-isopropylmalate). The polypeptide is 2-isopropylmalate synthase (Burkholderia vietnamiensis (strain G4 / LMG 22486) (Burkholderia cepacia (strain R1808))).